The following is a 554-amino-acid chain: Glucose-6-phosphate isomerase (554 aa).

At Ser-2 the chain carries N-acetylserine. Thr-53 carries the post-translational modification Phosphothreonine. D-glucose 6-phosphate is bound by residues 168-169 (GS), 218-223 (SKTFTT), Gln-363, Glu-367, His-398, and Lys-520. The residue at position 220 (Thr-220) is a Phosphothreonine. Residue Glu-367 is the Proton donor of the active site. Active-site residues include His-398 and Lys-520.

This sequence belongs to the GPI family. Homodimer.

It localises to the cytoplasm. The protein resides in the cytosol. It catalyses the reaction alpha-D-glucose 6-phosphate = beta-D-fructose 6-phosphate. The protein operates within carbohydrate degradation; glycolysis; D-glyceraldehyde 3-phosphate and glycerone phosphate from D-glucose: step 2/4. With respect to regulation, strongly inhibited by the polyol (sugar alcohol) phosphate D-glucitol 6-phosphate (D-sorbitol 6-phosphate). Also inhibited by the polyol (sugar alcohol) phosphate D-ribitol 5-phosphate. In the cytoplasm, catalyzes the conversion of glucose-6-phosphate to fructose-6-phosphate, the second step in glycolysis, and the reverse reaction during gluconeogenesis. The chain is Glucose-6-phosphate isomerase (PGI1) from Saccharomyces cerevisiae (strain ATCC 204508 / S288c) (Baker's yeast).